The sequence spans 112 residues: C-X-C motif chemokine 6 (112 aa).

A signal peptide spans 1–36 (MRLLSSRAARVSGPSGSLCALLALLLLTPPGPLASA). 2 cysteine pairs are disulfide-bonded: Cys48-Cys74 and Cys50-Cys90.

The protein belongs to the intercrine alpha (chemokine CxC) family.

The protein localises to the secreted. Its function is as follows. Chemotactic for neutrophil granulocytes. Signals through binding and activation of its receptors (CXCR1 and CXCR2). In addition to its chemotactic and angiogenic properties, it has strong antibacterial activity against Gram-positive and Gram-negative bacteria (90-fold-higher when compared to CXCL5 and CXCL7). This chain is C-X-C motif chemokine 6 (CXCL6), found in Bos taurus (Bovine).